Here is a 450-residue protein sequence, read N- to C-terminus: Phosphoglucosamine mutase (450 aa).

The active-site Phosphoserine intermediate is Ser101. Residues Ser101, Asp240, Asp242, and Asp244 each coordinate Mg(2+). At Ser101 the chain carries Phosphoserine.

The protein belongs to the phosphohexose mutase family. It depends on Mg(2+) as a cofactor. Activated by phosphorylation.

It carries out the reaction alpha-D-glucosamine 1-phosphate = D-glucosamine 6-phosphate. Its function is as follows. Catalyzes the conversion of glucosamine-6-phosphate to glucosamine-1-phosphate. The chain is Phosphoglucosamine mutase from Streptococcus pneumoniae (strain JJA).